The sequence spans 885 residues: Insulin receptor substrate 1-A (885 aa).

In terms of domain architecture, IRS-type PTB spans 1 to 56 (MNIRRCGHSENFFFIEVGRSAVTGAGEFWMQVDDSVVAQNMHETILEAMKALSDEF). Positions 56–225 (FRPRSKSQSS…GGFISSDEYG (170 aa)) are disordered. Low complexity-rich tracts occupy residues 61–75 (KSQSSSNCSNPISVP), 99–109 (SATATSPAGGA), 176–197 (SPSATSPVSLSSSSTSGHGSTS), and 205–217 (SSASISGSPSDGG). Serine 104 carries the phosphoserine modification. Tyrosine 257 is modified (phosphotyrosine; by INSR). The YXXM motif 1 motif lies at 257-260 (YICM). 2 stretches are compositionally biased toward polar residues: residues 263-276 (SSSHLQRGPQQRYQ) and 296-313 (SSGTSPPTVSHQKTPSQS). 2 disordered regions span residues 263–282 (SSSHLQRGPQQRYQPSRGEE) and 293–313 (RTHSSGTSPPTVSHQKTPSQS). Short sequence motifs (YXXM motif) lie at residues 318 to 321 (YTEM), 364 to 367 (YMPM), 381 to 384 (YMPM), 409 to 412 (YMMM), and 451 to 454 (YINM). Residues tyrosine 364 and tyrosine 381 each carry the phosphotyrosine; by INSR modification. Tyrosine 409 is subject to Phosphotyrosine. Positions 501-581 (NLRISANSGH…LPPEPKSPGE (81 aa)) are disordered. Residues 504–515 (ISANSGHNLYTE) are compositionally biased toward polar residues. Residues 516–526 (DSSSSSTSSDS) are compositionally biased toward low complexity. Tyrosine 582 and tyrosine 620 each carry phosphotyrosine; by INSR. The interval 582 to 584 (YVN) is GRB2-binding. The short motif at 620–623 (YMNM) is the YXXM motif 7 element. Residues 637–660 (TSSYEPPNKPVNSVCPTETCSSSR) are compositionally biased toward polar residues. The interval 637–665 (TSSYEPPNKPVNSVCPTETCSSSRPPIRG) is disordered. The residue at position 672 (tyrosine 672) is a Phosphotyrosine; by INSR. 2 consecutive short sequence motifs (YXXM motif) follow at residues 672–675 (YMSM) and 706–709 (YAEM). Positions 732–803 (ASRSSLLGQG…SGEDVKRHSS (72 aa)) are disordered. 2 stretches are compositionally biased toward polar residues: residues 743–758 (GPSAFTRVSLSPNRNP) and 777–792 (ETFSSTPTTARVTTGP). 2 positions are modified to phosphotyrosine; by INSR: tyrosine 834 and tyrosine 866.

In terms of assembly, interacts with the NPXY motif of tyrosine-phosphorylated igf1r and insr via the PTB domain. Binds to phosphatidylinositol 3-kinase p85 subunit at a low level in vitro prior to phosphorylation. Binding is greatly enhanced following tyrosine phosphorylation by insr and probably occurs via the phosphorylated YXXM motifs. Post-translationally, phosphorylation of Tyr-582 is required for grb2-binding.

In terms of biological role, may mediate the control of various cellular processes by insulin. When phosphorylated by the insulin receptor binds specifically to various cellular proteins containing SH2 domains such as phosphatidylinositol 3-kinase p85 subunit or grb2. Activates phosphatidylinositol 3-kinase when bound to the regulatory p85 subunit. The chain is Insulin receptor substrate 1-A (irs1-a) from Xenopus laevis (African clawed frog).